Consider the following 1615-residue polypeptide: Low-density lipoprotein receptor-related protein 5 (1615 aa).

The first 31 residues, 1 to 31 (MEAAPPGPPWPLLLLLLLLLALCGCPAPAAA), serve as a signal peptide directing secretion. Residues 32-288 (SPLLLFANRR…YSPMDIQVLS (257 aa)) are beta-propeller 1. The Extracellular portion of the chain corresponds to 32–1384 (SPLLLFANRR…PPSDDSPAHS (1353 aa)). LDL-receptor class B repeat units lie at residues 75–119 (GAVY…DWVG), 120–162 (KKLY…DPAH), 163–206 (GYMY…DLEE), 207–247 (QKLY…TLSG), and 248–290 (DTLY…LSQE). Residues 78–81 (YWTD) form a YWTD 1 repeat. Asn-93 is a glycosylation site (N-linked (GlcNAc...) asparagine). The stretch at 123 to 126 (YWTD) is one YWTD 2 repeat. N-linked (GlcNAc...) asparagine glycosylation is present at Asn-138. The YWTD 3 repeat unit spans residues 166-169 (YWTD). One copy of the YWTD 4 repeat lies at 251–254 (YWTD). Residues 295-337 (FHTRCEEDNGGCSHLCLLSPSEPFYTCACPTGVQLQDNGRTCK) form the EGF-like 1 domain. 3 disulfides stabilise this stretch: Cys-299/Cys-310, Cys-306/Cys-321, and Cys-323/Cys-336. The tract at residues 341-602 (EEVLLLARRT…AVNVAKVVGT (262 aa)) is beta-propeller 2. 5 LDL-receptor class B repeats span residues 385 to 427 (GYVY…DWVA), 428 to 470 (RNLY…HPVM), 471 to 514 (GLMY…DLQE), 515 to 557 (GKLY…LGDF), and 558 to 600 (IYWT…AKVV). YWTD repeat units follow at residues 388-391 (YWTD) and 431-434 (YWTD). Residue Asn-446 is glycosylated (N-linked (GlcNAc...) asparagine). A YWTD 7 repeat occupies 474–477 (YWTD). A glycan (N-linked (GlcNAc...) asparagine) is linked at Asn-499. The YWTD 8 repeat unit spans residues 559–562 (YWTD). The EGF-like 2 domain occupies 601 to 641 (GTNPCADRNGGCSHLCFFTPHATRCGCPIGLELLSDMKTCI). 3 disulfides stabilise this stretch: Cys-605–Cys-616, Cys-612–Cys-625, and Cys-627–Cys-640. Residues 644–903 (EAFLVFTSRA…VFHSSRQDGL (260 aa)) form a beta-propeller 3 region. 5 LDL-receptor class B repeats span residues 687–729 (NHIY…DWMG), 730–772 (KNLY…DPTK), 773–815 (GYIY…DYAD), 816–855 (QRLY…TQYS), and 856–898 (DYIY…FHSS). The YWTD 9 repeat unit spans residues 690–693 (YWTD). Asn-705 carries an N-linked (GlcNAc...) asparagine glycan. YWTD repeat units lie at residues 819–822 (YWTD) and 859–862 (YWTD). An N-linked (GlcNAc...) asparagine glycan is attached at Asn-878. An EGF-like 3 domain is found at 902–942 (GLNDCMHNNGQCGQLCLAIPGGHRCGCASHYTLDPSSRNCS). Cystine bridges form between Cys-906-Cys-917, Cys-913-Cys-926, and Cys-928-Cys-941. Residues 945 to 1212 (TTFLLFSQKS…AVEEVSLEEF (268 aa)) are beta-propeller 4. 5 LDL-receptor class B repeats span residues 989-1035 (KFIY…DIYS), 1036-1078 (RTLF…NAER), 1079-1123 (GYLY…DNTL), 1124-1164 (GKLF…TILG), and 1165-1207 (KHLY…VEEV). Residues 1213 to 1254 (SAHPCARDNGGCSHICIAKGDGTPRCSCPVHLVLLQNLLTCG) form the EGF-like 4 domain. Intrachain disulfides connect Cys-1217–Cys-1228, Cys-1224–Cys-1238, Cys-1240–Cys-1253, Cys-1259–Cys-1273, Cys-1266–Cys-1286, Cys-1280–Cys-1295, Cys-1298–Cys-1310, Cys-1305–Cys-1323, Cys-1317–Cys-1332, Cys-1336–Cys-1348, Cys-1343–Cys-1361, and Cys-1355–Cys-1370. LDL-receptor class A domains lie at 1258–1296 (TCSP…EGCP), 1297–1333 (VCSA…ADCD), and 1335–1371 (ICLP…LMCE). The helical transmembrane segment at 1385–1407 (SAIGPVIGIILSLFVMGGVYFVC) threads the bilayer. Topologically, residues 1408–1615 (QRVVCQRYAG…PPPSPCTDSS (208 aa)) are cytoplasmic. A disordered region spans residues 1475–1501 (RNHVTGASSSSSSSTKATLYPPILNPP). The PPPSP motif A motif lies at 1500–1506 (PPPSPAT). Positions 1538 to 1545 (PPTTPCST) match the PPPSP motif B motif. The tract at residues 1568-1615 (SDSDPYPPPPTPHSQYLSAEDSCPPSPATERSYFHLFPPPPSPCTDSS) is disordered. The PPPSP motif C motif lies at 1574–1581 (PPPPTPHS). The PPPSP motif D motif lies at 1591 to 1596 (PPSPAT). A compositionally biased stretch (pro residues) spans 1604–1615 (FPPPPSPCTDSS). The PPPSP motif E signature appears at 1605–1612 (PPPPSPCT).

The protein belongs to the LDLR family. As to quaternary structure, homodimer; disulfide-linked. Forms phosphorylated oligomer aggregates on Wnt-signaling. Component of a Wnt-signaling complex that contains a WNT protein, a FZD protein and LRP5 or LRP6. Interacts with FZD8; the interaction is formed on WNT-binding and signaling. Interacts (via the phosphorylated PPPSP motif domains) with AXIN1; the interaction prevents inhibition of beta-catenin phosphorylation and signaling and is enhanced in the presence of GSK3B and WNT1 or WNT3A. Interacts (via beta-propeller regions 3 and 4) with DKK1; the interaction, enhanced by MESD and/or KREMEN, inhibits beta-catenin signaling by preventing GSK3-mediated phosphorylation of the PPPSP motifs and subsequent, AXIN1 binding. Interacts with MESD; the interaction prevents the formation of LRP5 aggregates, targets LRP5 to the plasma membrane and, when complexed with KREMEN2, increases DKK1 binding. Interacts with CSNK1E. Interacts with SOST; the interaction antagonizes canonical Wnt signaling. Interacts with APCDD1. Interacts with CAPRIN2. Post-translationally, phosphorylation of cytoplasmic PPPSP motifs regulates the signal transduction of the Wnt signaling pathway through acting as a docking site for AXIN1. Widely expressed, with the highest level of expression in the liver and in aorta.

Its subcellular location is the membrane. It is found in the endoplasmic reticulum. In terms of biological role, acts as a coreceptor with members of the frizzled family of seven-transmembrane spanning receptors to transduce signal by Wnt proteins. Activates the canonical Wnt signaling pathway that controls cell fate determination and self-renewal during embryonic development and adult tissue regeneration. In particular, may play an important role in the development of the posterior patterning of the epiblast during gastrulation. During bone development, regulates osteoblast proliferation and differentiation thus determining bone mass. Mechanistically, the formation of the signaling complex between Wnt ligand, frizzled receptor and LRP5 coreceptor promotes the recruitment of AXIN1 to LRP5, stabilizing beta-catenin/CTNNB1 and activating TCF/LEF-mediated transcriptional programs. Acts as a coreceptor for non-Wnt proteins, such as norrin/NDP. Binding of norrin/NDP to frizzled 4/FZD4-LRP5 receptor complex triggers beta-catenin/CTNNB1-dependent signaling known to be required for retinal vascular development. Plays a role in controlling postnatal vascular regression in retina via macrophage-induced endothelial cell apoptosis. This is Low-density lipoprotein receptor-related protein 5 from Homo sapiens (Human).